Here is a 208-residue protein sequence, read N- to C-terminus: Ribosome maturation factor RimP (208 aa).

The protein belongs to the RimP family.

It localises to the cytoplasm. Functionally, required for maturation of 30S ribosomal subunits. This chain is Ribosome maturation factor RimP, found in Bartonella tribocorum (strain CIP 105476 / IBS 506).